Reading from the N-terminus, the 223-residue chain is UPF0441 protein YgiB (223 aa).

The segment covering 178-195 has biased composition (low complexity); that stretch reads TVPKTAMAPKPATTTTVT. A disordered region spans residues 178–223; it reads TVPKTAMAPKPATTTTVTRGGFGESVAKQSTMQRSATGTSSRSMGG. Residues 204-223 show a composition bias toward polar residues; sequence AKQSTMQRSATGTSSRSMGG.

Belongs to the UPF0441 family.

The protein is UPF0441 protein YgiB of Shigella boydii serotype 18 (strain CDC 3083-94 / BS512).